A 569-amino-acid chain; its full sequence is Aspartic proteinase 3 (569 aa).

An N-terminal signal peptide occupies residues 1 to 21; that stretch reads MKLKTVRSAVLSSLFASQVLG. The propeptide occupies 22-67; that stretch reads KIIPAANKRDDDSNSKFVKLPFHKLYGDSLENVGSDKKPEVRLLKR. Residues 83–475 form the Peptidase A1 domain; that stretch reads YSVDLEVGTP…DLENLEISMA (393 aa). The N-linked (GlcNAc...) asparagine glycan is linked to Asn95. Asp101 is an active-site residue. Asn203, Asn232, Asn242, Asn245, Asn299, and Asn358 each carry an N-linked (GlcNAc...) asparagine glycan. Asp371 is an active-site residue. Asn480, Asn522, and Asn532 each carry an N-linked (GlcNAc...) asparagine glycan. Asn548 carries the GPI-anchor amidated asparagine lipid modification. Positions 549–569 are cleaved as a propeptide — removed in mature form; that stretch reads VGDHIVPSLPLTLISLLFAFI.

The protein belongs to the peptidase A1 family. In terms of assembly, consists of an alpha and a beta subunit, which are maintained together by a disulfide bond. In terms of processing, the zymogen is transported to the periplasm, where the propeptide is removed and the enzyme is further subjected to an internal, autocatalytic cleavage to generate an alpha/beta two-subunit endopeptidase. The proteolytic processing at the cell surface is regulated by the environmental pH. Extensively N-glycosylated.

The protein resides in the cell membrane. The enzyme catalyses Hydrolyzes various precursor proteins with Arg or Lys in P1, and commonly Arg or Lys also in P2. The P3 amino acid is usually non-polar, but otherwise additional basic amino acids are favorable in both non-prime and prime positions.. Its function is as follows. Cleaves proteins C-terminally to mono- and paired-basic residues. Involved in the shedding of a subset of GPI-anchored plasma membrane proteins from the cell surface, including itself, GAS1 and MSB2. May also play a role in the maturation of GPI-mannoproteins associated with the cell wall. Can process the alpha-mating factor precursor. Required for cell wall integrity. The chain is Aspartic proteinase 3 (YPS1) from Saccharomyces cerevisiae (strain ATCC 204508 / S288c) (Baker's yeast).